The primary structure comprises 417 residues: Serpin A9 (417 aa).

Residues 1 to 23 (MASYLYGVLFAVGLCAPIYCVSP) form the signal peptide. 2 N-linked (GlcNAc...) asparagine glycosylation sites follow: Asn-101 and Asn-390.

It belongs to the serpin family. As to expression, highly expressed in normal germinal center (GC) B-cells and GC B-cell-derived malignancies.

It localises to the secreted. The protein resides in the cytoplasm. Its subcellular location is the membrane. In terms of biological role, protease inhibitor that inhibits trypsin and trypsin-like serine proteases (in vitro). Inhibits plasmin and thrombin with lower efficiency (in vitro). The polypeptide is Serpin A9 (SERPINA9) (Homo sapiens (Human)).